The following is a 94-amino-acid chain: Aspartyl/glutamyl-tRNA(Asn/Gln) amidotransferase subunit C (94 aa).

This sequence belongs to the GatC family. In terms of assembly, heterotrimer of A, B and C subunits.

The catalysed reaction is L-glutamyl-tRNA(Gln) + L-glutamine + ATP + H2O = L-glutaminyl-tRNA(Gln) + L-glutamate + ADP + phosphate + H(+). The enzyme catalyses L-aspartyl-tRNA(Asn) + L-glutamine + ATP + H2O = L-asparaginyl-tRNA(Asn) + L-glutamate + ADP + phosphate + 2 H(+). Its function is as follows. Allows the formation of correctly charged Asn-tRNA(Asn) or Gln-tRNA(Gln) through the transamidation of misacylated Asp-tRNA(Asn) or Glu-tRNA(Gln) in organisms which lack either or both of asparaginyl-tRNA or glutaminyl-tRNA synthetases. The reaction takes place in the presence of glutamine and ATP through an activated phospho-Asp-tRNA(Asn) or phospho-Glu-tRNA(Gln). The sequence is that of Aspartyl/glutamyl-tRNA(Asn/Gln) amidotransferase subunit C from Hydrogenobaculum sp. (strain Y04AAS1).